A 255-amino-acid chain; its full sequence is Thiazole synthase (255 aa).

The Schiff-base intermediate with DXP role is filled by Lys97. Residues Gly158, 184-185 (AG), and 206-207 (NT) contribute to the 1-deoxy-D-xylulose 5-phosphate site.

This sequence belongs to the ThiG family. In terms of assembly, homotetramer. Forms heterodimers with either ThiH or ThiS.

It localises to the cytoplasm. The enzyme catalyses [ThiS sulfur-carrier protein]-C-terminal-Gly-aminoethanethioate + 2-iminoacetate + 1-deoxy-D-xylulose 5-phosphate = [ThiS sulfur-carrier protein]-C-terminal Gly-Gly + 2-[(2R,5Z)-2-carboxy-4-methylthiazol-5(2H)-ylidene]ethyl phosphate + 2 H2O + H(+). Its pathway is cofactor biosynthesis; thiamine diphosphate biosynthesis. Functionally, catalyzes the rearrangement of 1-deoxy-D-xylulose 5-phosphate (DXP) to produce the thiazole phosphate moiety of thiamine. Sulfur is provided by the thiocarboxylate moiety of the carrier protein ThiS. In vitro, sulfur can be provided by H(2)S. This chain is Thiazole synthase, found in Moorella thermoacetica (strain ATCC 39073 / JCM 9320).